The chain runs to 514 residues: Probable drug/proton antiporter YHK8 (514 aa).

Over 1 to 74 the chain is Cytoplasmic; it reads MVAEFQIASA…RHMSTARRYY (74 aa). The helical transmembrane segment at 75–95 threads the bilayer; the sequence is ISSLITFTSMVITMISSSWTL. Residues 96–111 lie on the Extracellular side of the membrane; the sequence is PSTHIIEHFHISHEVS. A helical transmembrane segment spans residues 112–132; it reads TLGITLYVFGLGIGPLFLSPL. The Cytoplasmic portion of the chain corresponds to 133-141; that stretch reads SELYGRRIT. The chain crosses the membrane as a helical span at residues 142–162; sequence FLYALTLSIIWQCLTIWSKTI. Residues 163–170 are Extracellular-facing; that stretch reads TGVMFGRF. The helical transmembrane segment at 171 to 191 threads the bilayer; it reads LSGFFGSAFLSVAGGAIADIF. At 192-200 the chain is on the cytoplasmic side; sequence DKDQIGIPM. The chain crosses the membrane as a helical span at residues 201 to 221; sequence AIYTTSAFLGPSLGPIIGGAL. Over 222–227 the chain is Extracellular; sequence YHQSYK. Residues 228-248 traverse the membrane as a helical segment; it reads WTFITLLITSGCCLVMIIFTI. Topologically, residues 249–307 are cytoplasmic; the sequence is PETYKPMLLIRKAKRLRKEKNDQRYYAVLEVTREQTSLLSAIFLSTKRPFGLLLRDRMM. A helical membrane pass occupies residues 308–328; it reads GVLCFYTGLELAIIYLYFVAF. The Extracellular portion of the chain corresponds to 329–342; the sequence is PYVFKKLYNFGPME. The helical transmembrane segment at 343–363 threads the bilayer; that stretch reads IACSYIGIMVGMILSAPTCLL. The Cytoplasmic portion of the chain corresponds to 364-386; that stretch reads FQKTFEWRVKRNNGVKTPEMRFE. A helical membrane pass occupies residues 387 to 407; sequence PLFYGAFLTPVGLFIFAFTCY. The Extracellular segment spans residues 408–412; the sequence is KHVHW. The helical transmembrane segment at 413–433 threads the bilayer; sequence IAPIIGSAIFGSGVYFVFTGV. Over 434–447 the chain is Cytoplasmic; the sequence is FAYTVDAYRRYAAS. A helical transmembrane segment spans residues 448 to 468; that stretch reads GMACNTFVRCIMAGVFPLFGL. Over 469-477 the chain is Extracellular; sequence QMYKSMGVN. The chain crosses the membrane as a helical span at residues 478-498; it reads WAGFLLAMVTVAMIPVPFLFT. The Cytoplasmic portion of the chain corresponds to 499-514; the sequence is KYGARLRAKSPYAWDD.

This sequence belongs to the major facilitator superfamily. CAR1 family.

The protein resides in the membrane. Functionally, probable drug/proton antiporter. This is Probable drug/proton antiporter YHK8 (YHK8) from Saccharomyces cerevisiae (strain ATCC 204508 / S288c) (Baker's yeast).